Reading from the N-terminus, the 55-residue chain is Ribosome modulation factor (55 aa).

It belongs to the ribosome modulation factor family. Associates exclusively with 100S ribosomes.

Its subcellular location is the cytoplasm. Functionally, during stationary phase, converts 70S ribosomes to an inactive dimeric form (100S ribosomes). May form immature 90S particles, which are converted to mature 100S ribosomes by the hibernation promoting factor Hpf. This Escherichia coli O157:H7 protein is Ribosome modulation factor.